A 145-amino-acid chain; its full sequence is D-aminoacyl-tRNA deacylase (145 aa).

Positions 137 to 138 (GP) match the Gly-cisPro motif, important for rejection of L-amino acids motif.

This sequence belongs to the DTD family. Homodimer.

It is found in the cytoplasm. The catalysed reaction is glycyl-tRNA(Ala) + H2O = tRNA(Ala) + glycine + H(+). It catalyses the reaction a D-aminoacyl-tRNA + H2O = a tRNA + a D-alpha-amino acid + H(+). Functionally, an aminoacyl-tRNA editing enzyme that deacylates mischarged D-aminoacyl-tRNAs. Also deacylates mischarged glycyl-tRNA(Ala), protecting cells against glycine mischarging by AlaRS. Acts via tRNA-based rather than protein-based catalysis; rejects L-amino acids rather than detecting D-amino acids in the active site. By recycling D-aminoacyl-tRNA to D-amino acids and free tRNA molecules, this enzyme counteracts the toxicity associated with the formation of D-aminoacyl-tRNA entities in vivo and helps enforce protein L-homochirality. The protein is D-aminoacyl-tRNA deacylase of Pseudomonas syringae pv. syringae (strain B728a).